The sequence spans 421 residues: Testin (421 aa).

Residues 92-199 (MILTNPVAAK…GDVKLPREMD (108 aa)) enclose the PET domain. Residues 133 to 164 (EKQPVAGSEGAQYRKKQLAKQLPAHDQDPSKC) are disordered. Positions 155 to 164 (PAHDQDPSKC) are enriched in basic and acidic residues. 3 LIM zinc-binding domains span residues 234–297 (YSCY…CDSE), 299–359 (PRCA…NHAV), and 362–421 (QGCH…KMMS).

It belongs to the prickle / espinas / testin family. In terms of assembly, interacts via LIM domain 1 with ZYX. Interacts (via LIM domain 3) with ENAH and VASP. Interacts with ALKBH4, talin, actin, alpha-actinin, GRIP1 and PXN. Interacts (via LIM domain 2) with ACTL7A (via N-terminus). Heterodimer with ACTL7A; the heterodimer interacts with ENAH to form a heterotrimer.

The protein localises to the cytoplasm. It is found in the cell junction. It localises to the focal adhesion. Its function is as follows. Scaffold protein that may play a role in cell adhesion, cell spreading and in the reorganization of the actin cytoskeleton. Plays a role in the regulation of cell proliferation. May act as a tumor suppressor. This is Testin (TES) from Mustela putorius furo (European domestic ferret).